We begin with the raw amino-acid sequence, 367 residues long: Protein valois (367 aa).

WD repeat units lie at residues 101–139, 152–192, and 198–238; these read QAEH…RDSQ, AHPT…MVST, and SHTD…PSST. Positions 309–367 are interaction with csul; the sequence is LAAMSNLPASVKVANVQAGHEFIYTHQDTHSRLTDAVWTDDSTLITIGHGRKMVTHAIK.

In terms of assembly, interacts with csul and tud. As to expression, in oocytes, localizes to pole plasm and nuage (at protein level). Expressed stronger in the germline than in somatic cells. In the germarium it sometimes concentrates in perinuclear aggregates that disappear by stage 2 of oogenesis. At later stages, it is uniformly distributed in the nurse cells and oocyte, as well as in young embryos, with no particular enrichment at the posterior or inside the pole cells (at protein level).

It localises to the cytoplasm. Functionally, involved in specific localization of cytoplasmic proteins during the formation of pole plasm. Required for synthesis and/or stability of oskar protein (osk) and localization of tudor (tud) in both the nuage and posterior pole of the oocyte. Required for normal posterior localization of osk in later stages of oogenesis and for posterior localization of the vasa (vas) protein during the entire process of pole plasm assembly. May act by regulating the complex that contains the arginine N-methyltransferase csul. This Drosophila melanogaster (Fruit fly) protein is Protein valois (vls).